The following is a 370-amino-acid chain: NAD-dependent histone deacetylase HST4 (370 aa).

A disordered region spans residues 1-27 (MKQKFVLPITPPSTAEKKPQTENRCNE). Basic and acidic residues predominate over residues 15 to 27 (AEKKPQTENRCNE). One can recognise a Deacetylase sirtuin-type domain in the interval 75-370 (RHHMDRDAGF…GDCQHVTSLL (296 aa)). NAD(+) contacts are provided by residues 100–119 (GAGI…EGIF) and 184–187 (QNID). The Proton acceptor role is filled by His213. Zn(2+) contacts are provided by Cys221, Cys224, Cys251, and Cys254. NAD(+) is bound by residues 310 to 312 (GTS), 340 to 342 (NTS), and Cys363.

It belongs to the sirtuin family. Class I subfamily. It depends on Zn(2+) as a cofactor.

The protein localises to the nucleus. It catalyses the reaction N(6)-acetyl-L-lysyl-[protein] + NAD(+) + H2O = 2''-O-acetyl-ADP-D-ribose + nicotinamide + L-lysyl-[protein]. In terms of biological role, NAD-dependent histone deacetylase, which contributes together with HST3 to histone H3 'Lys-56' deacetylation, regulation of telomeric silencing, proper cell cycle progression, DNA damage control, DNA recombination, and genomic maintenance. This Saccharomyces cerevisiae (strain ATCC 204508 / S288c) (Baker's yeast) protein is NAD-dependent histone deacetylase HST4 (HST4).